A 189-amino-acid chain; its full sequence is Peptidyl-tRNA hydrolase (189 aa).

Tyr-15 serves as a coordination point for tRNA. His-20 (proton acceptor) is an active-site residue. TRNA contacts are provided by Phe-66, Asn-68, and Asn-114.

Belongs to the PTH family. Monomer.

It is found in the cytoplasm. The catalysed reaction is an N-acyl-L-alpha-aminoacyl-tRNA + H2O = an N-acyl-L-amino acid + a tRNA + H(+). In terms of biological role, hydrolyzes ribosome-free peptidyl-tRNAs (with 1 or more amino acids incorporated), which drop off the ribosome during protein synthesis, or as a result of ribosome stalling. Catalyzes the release of premature peptidyl moieties from peptidyl-tRNA molecules trapped in stalled 50S ribosomal subunits, and thus maintains levels of free tRNAs and 50S ribosomes. This Streptococcus pyogenes serotype M3 (strain ATCC BAA-595 / MGAS315) protein is Peptidyl-tRNA hydrolase.